Here is a 198-residue protein sequence, read N- to C-terminus: dITP/XTP pyrophosphatase (198 aa).

Thr7–Lys12 is a binding site for substrate. The Mg(2+) site is built by Glu40 and Asp69. Asp69 (proton acceptor) is an active-site residue. Substrate-binding positions include Thr70, Phe151–Asp154, Lys174, and His179–Arg180.

The protein belongs to the HAM1 NTPase family. Homodimer. Mg(2+) serves as cofactor.

It carries out the reaction XTP + H2O = XMP + diphosphate + H(+). The enzyme catalyses dITP + H2O = dIMP + diphosphate + H(+). It catalyses the reaction ITP + H2O = IMP + diphosphate + H(+). Functionally, pyrophosphatase that catalyzes the hydrolysis of nucleoside triphosphates to their monophosphate derivatives, with a high preference for the non-canonical purine nucleotides XTP (xanthosine triphosphate), dITP (deoxyinosine triphosphate) and ITP. Seems to function as a house-cleaning enzyme that removes non-canonical purine nucleotides from the nucleotide pool, thus preventing their incorporation into DNA/RNA and avoiding chromosomal lesions. This is dITP/XTP pyrophosphatase from Thermoanaerobacter sp. (strain X514).